A 538-amino-acid polypeptide reads, in one-letter code: DALR anticodon-binding domain-containing protein 3 (538 aa).

As to quaternary structure, part of a complex containing tRNA(Arg) and METTL2. Interacts with tRNA(Arg)(CCU) and tRNA(Arg)(UCU). Interacts with METTL2.

Involved in tRNA methylation. Facilitates the recognition and targeting of tRNA(Arg)(CCU) and tRNA(Arg)(UCU) substrates for N(3)-methylcytidine modification by METTL2. The protein is DALR anticodon-binding domain-containing protein 3 (Dalrd3) of Rattus norvegicus (Rat).